We begin with the raw amino-acid sequence, 195 residues long: Transcription repressor OFP17 (195 aa).

Residues 130-190 enclose the OVATE domain; it reads EDNAVEDACR…SRFYGELCRD (61 aa).

It is found in the nucleus. Transcriptional repressor that may regulate multiple aspects of plant growth and development through the regulation of BEL1-LIKE (BLH) and KNOX TALE (KNAT) homeodomain transcription factors. The protein is Transcription repressor OFP17 (OFP17) of Arabidopsis thaliana (Mouse-ear cress).